A 248-amino-acid polypeptide reads, in one-letter code: Aliphatic sulfonates import ATP-binding protein SsuB 2 (248 aa).

The 217-residue stretch at Val-14 to Ile-230 folds into the ABC transporter domain. Gly-46 to Ser-53 is an ATP binding site.

The protein belongs to the ABC transporter superfamily. Aliphatic sulfonates importer (TC 3.A.1.17.2) family. The complex is composed of two ATP-binding proteins (SsuB), two transmembrane proteins (SsuC) and a solute-binding protein (SsuA).

It is found in the cell inner membrane. It carries out the reaction ATP + H2O + aliphatic sulfonate-[sulfonate-binding protein]Side 1 = ADP + phosphate + aliphatic sulfonateSide 2 + [sulfonate-binding protein]Side 1.. Its function is as follows. Part of the ABC transporter complex SsuABC involved in aliphatic sulfonates import. Responsible for energy coupling to the transport system. This is Aliphatic sulfonates import ATP-binding protein SsuB 2 from Mesorhizobium japonicum (strain LMG 29417 / CECT 9101 / MAFF 303099) (Mesorhizobium loti (strain MAFF 303099)).